Here is a 573-residue protein sequence, read N- to C-terminus: Solute carrier family 41 member 2 (573 aa).

Residues M1–Q162 are Extracellular-facing. 2 positions are modified to phosphoserine: S137 and S138. A helical membrane pass occupies residues I163–I183. The Cytoplasmic portion of the chain corresponds to V184–E195. A helical transmembrane segment spans residues V196–S216. At R217–Q245 the chain is on the extracellular side. A helical transmembrane segment spans residues V246–P266. The Cytoplasmic portion of the chain corresponds to E267 to S282. The chain crosses the membrane as a helical span at residues V283–G303. The Extracellular segment spans residues S304–N313. A helical membrane pass occupies residues V314–I334. At S335–Y347 the chain is on the cytoplasmic side. Residues I348–A368 traverse the membrane as a helical segment. The Extracellular segment spans residues K369 to V376. The chain crosses the membrane as a helical span at residues L377–I397. The Cytoplasmic portion of the chain corresponds to L398–N406. A helical membrane pass occupies residues L407–I427. Residues Q428–A469 lie on the Extracellular side of the membrane. A helical transmembrane segment spans residues Q470–M490. Over K491–T498 the chain is Cytoplasmic. Residues V499–I519 form a helical membrane-spanning segment. Topologically, residues A520–T543 are extracellular. Residues A544–I564 traverse the membrane as a helical segment. The Cytoplasmic segment spans residues G565–D573.

Belongs to the SLC41A transporter family.

It is found in the cell membrane. It carries out the reaction Mg(2+)(in) = Mg(2+)(out). The enzyme catalyses Mn(2+)(in) = Mn(2+)(out). The catalysed reaction is Co(2+)(in) = Co(2+)(out). It catalyses the reaction Ni(2+)(in) = Ni(2+)(out). It carries out the reaction Fe(2+)(in) = Fe(2+)(out). Functionally, acts as a plasma-membrane magnesium transporter. Can also mediate the transport of other divalent metal cations in an order of Ba(2+) &gt; Ni(2+) &gt; Co(2+) &gt; Fe(2+) &gt; Mn(2+). The protein is Solute carrier family 41 member 2 (Slc41a2) of Mus musculus (Mouse).